The following is a 368-amino-acid chain: Cobalt-precorrin-5B C(1)-methyltransferase (368 aa).

Belongs to the CbiD family.

The catalysed reaction is Co-precorrin-5B + S-adenosyl-L-methionine = Co-precorrin-6A + S-adenosyl-L-homocysteine. Its pathway is cofactor biosynthesis; adenosylcobalamin biosynthesis; cob(II)yrinate a,c-diamide from sirohydrochlorin (anaerobic route): step 6/10. Catalyzes the methylation of C-1 in cobalt-precorrin-5B to form cobalt-precorrin-6A. This Brucella canis (strain ATCC 23365 / NCTC 10854 / RM-666) protein is Cobalt-precorrin-5B C(1)-methyltransferase.